Here is a 173-residue protein sequence, read N- to C-terminus: Co-chaperone protein HscB homolog (173 aa).

One can recognise a J domain in the interval 5–77; that stretch reads CHYALFDLQP…PRRARYLLAI (73 aa).

Belongs to the HscB family. Interacts with HscA and stimulates its ATPase activity.

Functionally, co-chaperone involved in the maturation of iron-sulfur cluster-containing proteins. Seems to help targeting proteins to be folded toward HscA. This Pseudomonas putida (strain GB-1) protein is Co-chaperone protein HscB homolog.